Consider the following 129-residue polypeptide: Cytochrome c oxidase subunit 5B, mitochondrial (129 aa).

A mitochondrion-targeting transit peptide spans 1-31 (MASRLLRGVGALASQALRARGPNGVSVVRSM). N6-acetyllysine is present on residues K68 and K86. Zn(2+) is bound by residues C91, C93, C113, and C116. Position 121 is an N6-acetyllysine (K121).

Belongs to the cytochrome c oxidase subunit 5B family. In terms of assembly, component of the cytochrome c oxidase (complex IV, CIV), a multisubunit enzyme composed of 14 subunits. The complex is composed of a catalytic core of 3 subunits MT-CO1, MT-CO2 and MT-CO3, encoded in the mitochondrial DNA, and 11 supernumerary subunits COX4I1 (or COX4I2), COX5A, COX5B, COX6A2 (or COX6A1), COX6B1 (or COX6B2), COX6C, COX7A1 (or COX7A2), COX7B, COX7C, COX8B and NDUFA4, which are encoded in the nuclear genome. The complex exists as a monomer or a dimer and forms supercomplexes (SCs) in the inner mitochondrial membrane with NADH-ubiquinone oxidoreductase (complex I, CI) and ubiquinol-cytochrome c oxidoreductase (cytochrome b-c1 complex, complex III, CIII), resulting in different assemblies (supercomplex SCI(1)III(2)IV(1) and megacomplex MCI(2)III(2)IV(2)).

It localises to the mitochondrion inner membrane. It functions in the pathway energy metabolism; oxidative phosphorylation. Its function is as follows. Component of the cytochrome c oxidase, the last enzyme in the mitochondrial electron transport chain which drives oxidative phosphorylation. The respiratory chain contains 3 multisubunit complexes succinate dehydrogenase (complex II, CII), ubiquinol-cytochrome c oxidoreductase (cytochrome b-c1 complex, complex III, CIII) and cytochrome c oxidase (complex IV, CIV), that cooperate to transfer electrons derived from NADH and succinate to molecular oxygen, creating an electrochemical gradient over the inner membrane that drives transmembrane transport and the ATP synthase. Cytochrome c oxidase is the component of the respiratory chain that catalyzes the reduction of oxygen to water. Electrons originating from reduced cytochrome c in the intermembrane space (IMS) are transferred via the dinuclear copper A center (CU(A)) of subunit 2 and heme A of subunit 1 to the active site in subunit 1, a binuclear center (BNC) formed by heme A3 and copper B (CU(B)). The BNC reduces molecular oxygen to 2 water molecules using 4 electrons from cytochrome c in the IMS and 4 protons from the mitochondrial matrix. This is Cytochrome c oxidase subunit 5B, mitochondrial (COX5B) from Bos taurus (Bovine).